The sequence spans 503 residues: Probable cytosol aminopeptidase (503 aa).

The Mn(2+) site is built by Lys274 and Asp279. The active site involves Lys286. Residues Asp297, Asp356, and Glu358 each contribute to the Mn(2+) site. The active site involves Arg360.

This sequence belongs to the peptidase M17 family. Mn(2+) serves as cofactor.

It is found in the cytoplasm. The catalysed reaction is Release of an N-terminal amino acid, Xaa-|-Yaa-, in which Xaa is preferably Leu, but may be other amino acids including Pro although not Arg or Lys, and Yaa may be Pro. Amino acid amides and methyl esters are also readily hydrolyzed, but rates on arylamides are exceedingly low.. It carries out the reaction Release of an N-terminal amino acid, preferentially leucine, but not glutamic or aspartic acids.. Functionally, presumably involved in the processing and regular turnover of intracellular proteins. Catalyzes the removal of unsubstituted N-terminal amino acids from various peptides. The sequence is that of Probable cytosol aminopeptidase from Burkholderia thailandensis (strain ATCC 700388 / DSM 13276 / CCUG 48851 / CIP 106301 / E264).